The chain runs to 298 residues: UDP-3-O-acyl-N-acetylglucosamine deacetylase (298 aa).

Residues His-79, His-239, and Asp-243 each coordinate Zn(2+). His-266 acts as the Proton donor in catalysis.

Belongs to the LpxC family. The cofactor is Zn(2+).

The catalysed reaction is a UDP-3-O-[(3R)-3-hydroxyacyl]-N-acetyl-alpha-D-glucosamine + H2O = a UDP-3-O-[(3R)-3-hydroxyacyl]-alpha-D-glucosamine + acetate. The protein operates within glycolipid biosynthesis; lipid IV(A) biosynthesis; lipid IV(A) from (3R)-3-hydroxytetradecanoyl-[acyl-carrier-protein] and UDP-N-acetyl-alpha-D-glucosamine: step 2/6. Functionally, catalyzes the hydrolysis of UDP-3-O-myristoyl-N-acetylglucosamine to form UDP-3-O-myristoylglucosamine and acetate, the committed step in lipid A biosynthesis. In Wigglesworthia glossinidia brevipalpis, this protein is UDP-3-O-acyl-N-acetylglucosamine deacetylase.